Reading from the N-terminus, the 466-residue chain is 3-isopropylmalate dehydratase large subunit (466 aa).

Residues Cys347, Cys407, and Cys410 each coordinate [4Fe-4S] cluster.

It belongs to the aconitase/IPM isomerase family. LeuC type 1 subfamily. As to quaternary structure, heterodimer of LeuC and LeuD. [4Fe-4S] cluster is required as a cofactor.

The enzyme catalyses (2R,3S)-3-isopropylmalate = (2S)-2-isopropylmalate. The protein operates within amino-acid biosynthesis; L-leucine biosynthesis; L-leucine from 3-methyl-2-oxobutanoate: step 2/4. Its function is as follows. Catalyzes the isomerization between 2-isopropylmalate and 3-isopropylmalate, via the formation of 2-isopropylmaleate. The chain is 3-isopropylmalate dehydratase large subunit from Escherichia coli O139:H28 (strain E24377A / ETEC).